A 300-amino-acid chain; its full sequence is N-acetylmuramic acid 6-phosphate etherase (300 aa).

An SIS domain is found at Ile57–Lys220. Catalysis depends on Glu85, which acts as the Proton donor. Glu116 is a catalytic residue.

It belongs to the GCKR-like family. MurNAc-6-P etherase subfamily. In terms of assembly, homodimer.

It catalyses the reaction N-acetyl-D-muramate 6-phosphate + H2O = N-acetyl-D-glucosamine 6-phosphate + (R)-lactate. Its pathway is amino-sugar metabolism; 1,6-anhydro-N-acetylmuramate degradation. It functions in the pathway amino-sugar metabolism; N-acetylmuramate degradation. It participates in cell wall biogenesis; peptidoglycan recycling. In terms of biological role, specifically catalyzes the cleavage of the D-lactyl ether substituent of MurNAc 6-phosphate, producing GlcNAc 6-phosphate and D-lactate. Together with AnmK, is also required for the utilization of anhydro-N-acetylmuramic acid (anhMurNAc) either imported from the medium or derived from its own cell wall murein, and thus plays a role in cell wall recycling. This chain is N-acetylmuramic acid 6-phosphate etherase, found in Aliivibrio fischeri (strain MJ11) (Vibrio fischeri).